The chain runs to 74 residues: Small ribosomal subunit protein eS28 (74 aa).

It belongs to the eukaryotic ribosomal protein eS28 family.

The chain is Small ribosomal subunit protein eS28 from Halobacterium salinarum (strain ATCC 29341 / DSM 671 / R1).